Consider the following 298-residue polypeptide: Mitochondrial glycine transporter (298 aa).

3 Solcar repeats span residues 5–84 (TKTR…MRTA), 105–189 (LTTY…AKEV), and 211–295 (TSTL…LIKL). Helical transmembrane passes span 11 to 36 (LIGG…TRIQ), 59 to 85 (GTLP…RTAI), 111 to 136 (LISG…VRYE), 164 to 187 (GFGP…EKAK), 215 to 241 (VNST…KTRM), and 270 to 288 (GLSM…AWGI).

It belongs to the mitochondrial carrier (TC 2.A.29) family. SLC25A38 subfamily.

Its subcellular location is the mitochondrion inner membrane. The enzyme catalyses glycine(in) = glycine(out). Functionally, mitochondrial glycine transporter that imports glycine into the mitochondrial matrix. Plays an important role in providing glycine for the first enzymatic step in heme biosynthesis, the condensation of glycine with succinyl-CoA to produce 5-aminolevulinate (ALA) in the mitochondrial matrix. The protein is Mitochondrial glycine transporter of Vanderwaltozyma polyspora (strain ATCC 22028 / DSM 70294 / BCRC 21397 / CBS 2163 / NBRC 10782 / NRRL Y-8283 / UCD 57-17) (Kluyveromyces polysporus).